The following is a 138-amino-acid chain: Nucleoside diphosphate kinase (138 aa).

Residues Lys9, Phe57, Arg85, Thr91, Arg102, and Asn112 each contribute to the ATP site. The active-site Pros-phosphohistidine intermediate is His115.

It belongs to the NDK family. As to quaternary structure, homotetramer. Mg(2+) serves as cofactor.

It is found in the cytoplasm. It catalyses the reaction a 2'-deoxyribonucleoside 5'-diphosphate + ATP = a 2'-deoxyribonucleoside 5'-triphosphate + ADP. The catalysed reaction is a ribonucleoside 5'-diphosphate + ATP = a ribonucleoside 5'-triphosphate + ADP. In terms of biological role, major role in the synthesis of nucleoside triphosphates other than ATP. The ATP gamma phosphate is transferred to the NDP beta phosphate via a ping-pong mechanism, using a phosphorylated active-site intermediate. In Exiguobacterium sibiricum (strain DSM 17290 / CCUG 55495 / CIP 109462 / JCM 13490 / 255-15), this protein is Nucleoside diphosphate kinase.